Here is a 107-residue protein sequence, read N- to C-terminus: NADH-quinone oxidoreductase subunit K (107 aa).

Transmembrane regions (helical) follow at residues 9–29 (IGVNHFLTISVILFGLGMFAV), 36–56 (IVILMGVELILNAANINFLTF), and 68–88 (FSLFVIVLAAAEAAIALAIVI).

The protein belongs to the complex I subunit 4L family. As to quaternary structure, NDH-1 is composed of 14 different subunits. Subunits NuoA, H, J, K, L, M, N constitute the membrane sector of the complex.

The protein resides in the cell inner membrane. It carries out the reaction a quinone + NADH + 5 H(+)(in) = a quinol + NAD(+) + 4 H(+)(out). NDH-1 shuttles electrons from NADH, via FMN and iron-sulfur (Fe-S) centers, to quinones in the respiratory chain. The immediate electron acceptor for the enzyme in this species is believed to be a menaquinone. Couples the redox reaction to proton translocation (for every two electrons transferred, four hydrogen ions are translocated across the cytoplasmic membrane), and thus conserves the redox energy in a proton gradient. This is NADH-quinone oxidoreductase subunit K from Chlorobaculum tepidum (strain ATCC 49652 / DSM 12025 / NBRC 103806 / TLS) (Chlorobium tepidum).